The sequence spans 152 residues: Ribonuclease H (152 aa).

Positions 1-142 (MNSKVVIYTD…ADKLAVQGRE (142 aa)) constitute an RNase H type-1 domain. Residues Asp-10, Glu-48, Asp-70, and Asp-134 each contribute to the Mg(2+) site.

The protein belongs to the RNase H family. As to quaternary structure, monomer. The cofactor is Mg(2+).

The protein resides in the cytoplasm. The enzyme catalyses Endonucleolytic cleavage to 5'-phosphomonoester.. In terms of biological role, endonuclease that specifically degrades the RNA of RNA-DNA hybrids. In Rickettsia akari (strain Hartford), this protein is Ribonuclease H.